Consider the following 301-residue polypeptide: Recombination-associated protein RdgC (301 aa).

This sequence belongs to the RdgC family.

It localises to the cytoplasm. The protein localises to the nucleoid. Its function is as follows. May be involved in recombination. The polypeptide is Recombination-associated protein RdgC (Pseudoalteromonas atlantica (strain T6c / ATCC BAA-1087)).